The following is a 270-amino-acid chain: Flavodoxin/ferredoxin--NADP reductase (270 aa).

The FAD-binding FR-type domain maps to 12–113; that stretch reads VLPDAQTVTS…PKPVGTLVID (102 aa). Residues 62–65, 78–80, and 86–88 contribute to the FAD site; these read RAYS, YSI, and PLT. Threonine 126 is an NADP(+) binding site. Threonine 128 contributes to the FAD binding site. NADP(+)-binding positions include arginine 156, 192–193, arginine 201, and aspartate 238; that span reads TR. FAD is bound at residue 264 to 270; that stretch reads AFVGEGI.

Belongs to the ferredoxin--NADP reductase type 1 family. In terms of assembly, monomer. FAD serves as cofactor.

The protein localises to the cytoplasm. The catalysed reaction is 2 reduced [2Fe-2S]-[ferredoxin] + NADP(+) + H(+) = 2 oxidized [2Fe-2S]-[ferredoxin] + NADPH. It catalyses the reaction reduced [flavodoxin] + NADP(+) = oxidized [flavodoxin] + NADPH + 2 H(+). In terms of biological role, transports electrons between flavodoxin or ferredoxin and NADPH. The chain is Flavodoxin/ferredoxin--NADP reductase from Rhodobacter capsulatus (Rhodopseudomonas capsulata).